Here is a 261-residue protein sequence, read N- to C-terminus: NAD-capped RNA hydrolase NudC (261 aa).

2 residues coordinate substrate: Lys25 and Arg69. Residues Cys98 and Cys101 each coordinate Zn(2+). Substrate is bound at residue Glu111. Residues Cys116 and Cys119 each contribute to the Zn(2+) site. Tyr124 provides a ligand contact to substrate. Residues 125 to 248 enclose the Nudix hydrolase domain; the sequence is PQIAPCVIVA…TVARRLIEDT (124 aa). The a divalent metal cation site is built by Ala158, Glu174, and Glu178. The Nudix box motif lies at 159-180; that stretch reads GFVEVGETLEQAVSREVLEESN. 192 to 199 lines the substrate pocket; sequence QPWPFPHS. Glu219 lines the a divalent metal cation pocket. Ala241 lines the substrate pocket.

Belongs to the Nudix hydrolase family. NudC subfamily. As to quaternary structure, homodimer. Requires Mg(2+) as cofactor. Mn(2+) is required as a cofactor. The cofactor is Zn(2+).

It carries out the reaction a 5'-end NAD(+)-phospho-ribonucleoside in mRNA + H2O = a 5'-end phospho-adenosine-phospho-ribonucleoside in mRNA + beta-nicotinamide D-ribonucleotide + 2 H(+). It catalyses the reaction NAD(+) + H2O = beta-nicotinamide D-ribonucleotide + AMP + 2 H(+). The enzyme catalyses NADH + H2O = reduced beta-nicotinamide D-ribonucleotide + AMP + 2 H(+). In terms of biological role, mRNA decapping enzyme that specifically removes the nicotinamide adenine dinucleotide (NAD) cap from a subset of mRNAs by hydrolyzing the diphosphate linkage to produce nicotinamide mononucleotide (NMN) and 5' monophosphate mRNA. The NAD-cap is present at the 5'-end of some mRNAs and stabilizes RNA against 5'-processing. Has preference for mRNAs with a 5'-end purine. Catalyzes the hydrolysis of a broad range of dinucleotide pyrophosphates. This Yersinia enterocolitica serotype O:8 / biotype 1B (strain NCTC 13174 / 8081) protein is NAD-capped RNA hydrolase NudC.